The primary structure comprises 185 residues: MINEIKKSAEQKMQKTLEAFKNDLAKVRTGRAHTGILDHVMVDYYGSDVPVNQVANVTLIDARTIGVQPWEKPMLAKIEKAIRDSDLGLNPASMGEIIRVPMPMLTEERRKDLIKVVRGEAEGARVAVRNIRRDSNTEFKNLLKDKAITEDDERRGQDEIQKLTDKYTAEIDKMLATKEADLLAV.

This sequence belongs to the RRF family.

It localises to the cytoplasm. Its function is as follows. Responsible for the release of ribosomes from messenger RNA at the termination of protein biosynthesis. May increase the efficiency of translation by recycling ribosomes from one round of translation to another. The polypeptide is Ribosome-recycling factor (Chromobacterium violaceum (strain ATCC 12472 / DSM 30191 / JCM 1249 / CCUG 213 / NBRC 12614 / NCIMB 9131 / NCTC 9757 / MK)).